Here is a 144-residue protein sequence, read N- to C-terminus: Flagellar assembly factor FliW (144 aa).

It belongs to the FliW family. Interacts with translational regulator CsrA and flagellin(s).

It is found in the cytoplasm. Its function is as follows. Acts as an anti-CsrA protein, binds CsrA and prevents it from repressing translation of its target genes, one of which is flagellin. Binds to flagellin and participates in the assembly of the flagellum. This chain is Flagellar assembly factor FliW, found in Geobacillus kaustophilus (strain HTA426).